A 95-amino-acid polypeptide reads, in one-letter code: Aspartyl/glutamyl-tRNA(Asn/Gln) amidotransferase subunit C (95 aa).

The protein belongs to the GatC family. As to quaternary structure, heterotrimer of A, B and C subunits.

It catalyses the reaction L-glutamyl-tRNA(Gln) + L-glutamine + ATP + H2O = L-glutaminyl-tRNA(Gln) + L-glutamate + ADP + phosphate + H(+). It carries out the reaction L-aspartyl-tRNA(Asn) + L-glutamine + ATP + H2O = L-asparaginyl-tRNA(Asn) + L-glutamate + ADP + phosphate + 2 H(+). Functionally, allows the formation of correctly charged Asn-tRNA(Asn) or Gln-tRNA(Gln) through the transamidation of misacylated Asp-tRNA(Asn) or Glu-tRNA(Gln) in organisms which lack either or both of asparaginyl-tRNA or glutaminyl-tRNA synthetases. The reaction takes place in the presence of glutamine and ATP through an activated phospho-Asp-tRNA(Asn) or phospho-Glu-tRNA(Gln). The polypeptide is Aspartyl/glutamyl-tRNA(Asn/Gln) amidotransferase subunit C (Geotalea uraniireducens (strain Rf4) (Geobacter uraniireducens)).